We begin with the raw amino-acid sequence, 166 residues long: Ribosome-binding factor A (166 aa).

The interval 122 to 166 (HVADETDVEDSTDHEDDVTNSEDETKHVDIDTDSEEGTNTDGKAQ) is disordered. Positions 126–143 (ETDVEDSTDHEDDVTNSE) are enriched in acidic residues.

This sequence belongs to the RbfA family. In terms of assembly, monomer. Binds 30S ribosomal subunits, but not 50S ribosomal subunits or 70S ribosomes.

Its subcellular location is the cytoplasm. In terms of biological role, one of several proteins that assist in the late maturation steps of the functional core of the 30S ribosomal subunit. Associates with free 30S ribosomal subunits (but not with 30S subunits that are part of 70S ribosomes or polysomes). Required for efficient processing of 16S rRNA. May interact with the 5'-terminal helix region of 16S rRNA. The protein is Ribosome-binding factor A of Pseudoalteromonas translucida (strain TAC 125).